Consider the following 355-residue polypeptide: Putative arylamide transporter (355 aa).

6 helical membrane passes run threonine 22 to histidine 42, valine 44 to threonine 64, arginine 71 to alanine 91, leucine 92 to valine 112, valine 119 to phenylalanine 139, and leucine 150 to proline 170.

It is found in the cell membrane. Its function is as follows. May be involved in the import of arylamide compounds. The chain is Putative arylamide transporter from Mycobacterium bovis (strain ATCC BAA-935 / AF2122/97).